The sequence spans 112 residues: uncharacterized protein (112 aa).

Residues Asn-29 and Asn-60 are each glycosylated (N-linked (GlcNAc...) asparagine; by host). The chain crosses the membrane as a helical span at residues 66–86 (IFNGLGFILIVIFIYLLLITL).

Belongs to the asfivirus B117L family.

It is found in the host membrane. Its subcellular location is the virion. This is an uncharacterized protein from African swine fever virus (isolate Tick/South Africa/Pretoriuskop Pr4/1996) (ASFV).